The primary structure comprises 266 residues: L-aspartate dehydrogenase (266 aa).

Residues alanine 123 and asparagine 189 each coordinate NAD(+). Residue histidine 219 is part of the active site.

This sequence belongs to the L-aspartate dehydrogenase family.

It catalyses the reaction L-aspartate + NADP(+) + H2O = oxaloacetate + NH4(+) + NADPH + H(+). The catalysed reaction is L-aspartate + NAD(+) + H2O = oxaloacetate + NH4(+) + NADH + H(+). The protein operates within cofactor biosynthesis; NAD(+) biosynthesis; iminoaspartate from L-aspartate (dehydrogenase route): step 1/1. Its function is as follows. Specifically catalyzes the NAD or NADP-dependent dehydrogenation of L-aspartate to iminoaspartate. The chain is L-aspartate dehydrogenase from Cupriavidus taiwanensis (strain DSM 17343 / BCRC 17206 / CCUG 44338 / CIP 107171 / LMG 19424 / R1) (Ralstonia taiwanensis (strain LMG 19424)).